The following is a 153-amino-acid chain: 3-hydroxyacyl-[acyl-carrier-protein] dehydratase FabZ (153 aa).

His-56 is an active-site residue.

It belongs to the thioester dehydratase family. FabZ subfamily.

Its subcellular location is the cytoplasm. It carries out the reaction a (3R)-hydroxyacyl-[ACP] = a (2E)-enoyl-[ACP] + H2O. Its function is as follows. Involved in unsaturated fatty acids biosynthesis. Catalyzes the dehydration of short chain beta-hydroxyacyl-ACPs and long chain saturated and unsaturated beta-hydroxyacyl-ACPs. This is 3-hydroxyacyl-[acyl-carrier-protein] dehydratase FabZ from Halorhodospira halophila (strain DSM 244 / SL1) (Ectothiorhodospira halophila (strain DSM 244 / SL1)).